Reading from the N-terminus, the 391-residue chain is Probable tRNA sulfurtransferase (391 aa).

A THUMP domain is found at Asp-60 to Leu-167. Residues Leu-184–Leu-185, Tyr-209–Phe-210, Arg-266, Gly-288, and Gln-297 contribute to the ATP site.

This sequence belongs to the ThiI family.

Its subcellular location is the cytoplasm. It carries out the reaction [ThiI sulfur-carrier protein]-S-sulfanyl-L-cysteine + a uridine in tRNA + 2 reduced [2Fe-2S]-[ferredoxin] + ATP + H(+) = [ThiI sulfur-carrier protein]-L-cysteine + a 4-thiouridine in tRNA + 2 oxidized [2Fe-2S]-[ferredoxin] + AMP + diphosphate. The enzyme catalyses [ThiS sulfur-carrier protein]-C-terminal Gly-Gly-AMP + S-sulfanyl-L-cysteinyl-[cysteine desulfurase] + AH2 = [ThiS sulfur-carrier protein]-C-terminal-Gly-aminoethanethioate + L-cysteinyl-[cysteine desulfurase] + A + AMP + 2 H(+). It participates in cofactor biosynthesis; thiamine diphosphate biosynthesis. Catalyzes the ATP-dependent transfer of a sulfur to tRNA to produce 4-thiouridine in position 8 of tRNAs, which functions as a near-UV photosensor. Also catalyzes the transfer of sulfur to the sulfur carrier protein ThiS, forming ThiS-thiocarboxylate. This is a step in the synthesis of thiazole, in the thiamine biosynthesis pathway. The sulfur is donated as persulfide by IscS. The polypeptide is Probable tRNA sulfurtransferase (Lachnoclostridium phytofermentans (strain ATCC 700394 / DSM 18823 / ISDg) (Clostridium phytofermentans)).